The following is a 151-amino-acid chain: Protein-export protein SecB (151 aa).

Belongs to the SecB family. As to quaternary structure, homotetramer, a dimer of dimers. One homotetramer interacts with 1 SecA dimer.

The protein localises to the cytoplasm. Functionally, one of the proteins required for the normal export of preproteins out of the cell cytoplasm. It is a molecular chaperone that binds to a subset of precursor proteins, maintaining them in a translocation-competent state. It also specifically binds to its receptor SecA. In Acinetobacter baylyi (strain ATCC 33305 / BD413 / ADP1), this protein is Protein-export protein SecB.